A 148-amino-acid polypeptide reads, in one-letter code: UPF0179 protein Mevan_0979 (148 aa).

Belongs to the UPF0179 family.

The protein is UPF0179 protein Mevan_0979 of Methanococcus vannielii (strain ATCC 35089 / DSM 1224 / JCM 13029 / OCM 148 / SB).